The primary structure comprises 182 residues: Unknown protein 1 (182 aa).

The chain is Unknown protein 1 from Helianthus annuus (Common sunflower).